Reading from the N-terminus, the 721-residue chain is MASGVCPPAELGFGAEYYSVVNGVCSRAGSYFGGRPVLTQAVGYAVVLGFGAFFALFTSFLVWLEKRYVGSQHTSEWFNTAGRSVKTGLIASVIVSQWTWAATILQSSNVAWQYGVSGPFWYASGATIQVLLFGVMAIEIKRKAPNAHTVCEIVRARWGTPAHLVFLTFCLLTNVIVTAMLLLGGSAVVNALTGVNVYAASFLIPLGVVVYTLAGGLKATFLASYIHSVVVHAVLVVFVFLVYTSSSKLGSPRVVYDRLMAVASAARDCSADLSRNGQACGPVAGNFKGSYLTMLSSGGLVFGIINIVGNFGTVFVDNGYWMSAIAARPSSTHKGYLLGGLVWFAVPFSLATSLGLGALALDLPLTAAEAAKGLVPPATATALMGKSGSVLLLTMLFMAVTSAGSAELVAVSSLCTYDIYRTYLNPGASGKQILRVSRAVVLGFGCFMGVLAVVLNVAGVSLGWMYLAMGVIVGSAVIPIALLLLWSKANAVGAMGGAVSGCALGVAVWLTVAKVQYGRVNLDTTGRNAPMLAGNLVSILVGGAVHAACSLLRPQHYDWGTSREMITTVESVHAALDDELKEERLVHAKRWIVRWGLVFTAVIVVAWPALSLPARRYSLGYFTLWAAVAIAWGTVGSVVIILLPVAESWTTITKVCAGMFTNDAVYDRLDDVNLRLRAIMGAMPEAEKRYRQLHETEMHPAGTHPANDDDDDNNNNQMMHS.

15 consecutive transmembrane segments (helical) span residues 44-64, 85-105, 120-140, 164-184, 197-217, 221-241, 296-316, 341-361, 393-413, 440-460, 466-486, 492-512, 532-552, 592-612, and 625-645; these read YAVVLGFGAFFALFTSFLVWL, VKTGLIASVIVSQWTWAATIL, FWYASGATIQVLLFGVMAIEI, LVFLTFCLLTNVIVTAMLLLG, VYAASFLIPLGVVVYTLAGGL, FLASYIHSVVVHAVLVVFVFL, SSGGLVFGIINIVGNFGTVFV, LVWFAVPFSLATSLGLGALAL, LTMLFMAVTSAGSAELVAVSS, VVLGFGCFMGVLAVVLNVAGV, YLAMGVIVGSAVIPIALLLLW, VGAMGGAVSGCALGVAVWLTV, LAGNLVSILVGGAVHAACSLL, IVRWGLVFTAVIVVAWPALSL, and WAAVAIAWGTVGSVVIILLPV. Residues 699–721 form a disordered region; sequence HPAGTHPANDDDDDNNNNQMMHS.

Belongs to the sodium:solute symporter (SSF) (TC 2.A.21) family. In terms of tissue distribution, expressed in roots, leaves and shoots.

Its subcellular location is the cell membrane. Its function is as follows. High-affinity urea-proton symporter involved in the active transport of urea across the plasma membrane into root cells. May play an important role in urea uptake by plant cells at low external urea concentrations. The protein is Urea-proton symporter DUR3 (DUR3) of Oryza sativa subsp. japonica (Rice).